A 155-amino-acid chain; its full sequence is Xanthine-guanine phosphoribosyltransferase (155 aa).

Residues 37 to 38 (RG), arginine 69, and 90 to 98 (EDLVDTGTT) contribute to the 5-phospho-alpha-D-ribose 1-diphosphate site. Arginine 69 serves as a coordination point for GMP. Aspartate 91 is a Mg(2+) binding site. The guanine site is built by aspartate 94 and isoleucine 137. Positions 94 and 137 each coordinate xanthine. GMP-binding positions include 94-98 (DTGTT) and 136-137 (WI).

This sequence belongs to the purine/pyrimidine phosphoribosyltransferase family. XGPT subfamily. Homotetramer. The cofactor is Mg(2+).

It is found in the cell inner membrane. It carries out the reaction GMP + diphosphate = guanine + 5-phospho-alpha-D-ribose 1-diphosphate. It catalyses the reaction XMP + diphosphate = xanthine + 5-phospho-alpha-D-ribose 1-diphosphate. The catalysed reaction is IMP + diphosphate = hypoxanthine + 5-phospho-alpha-D-ribose 1-diphosphate. Its pathway is purine metabolism; GMP biosynthesis via salvage pathway; GMP from guanine: step 1/1. The protein operates within purine metabolism; XMP biosynthesis via salvage pathway; XMP from xanthine: step 1/1. Purine salvage pathway enzyme that catalyzes the transfer of the ribosyl-5-phosphate group from 5-phospho-alpha-D-ribose 1-diphosphate (PRPP) to the N9 position of the 6-oxopurines guanine and xanthine to form the corresponding ribonucleotides GMP (guanosine 5'-monophosphate) and XMP (xanthosine 5'-monophosphate), with the release of PPi. To a lesser extent, also acts on hypoxanthine. The chain is Xanthine-guanine phosphoribosyltransferase from Aeromonas hydrophila subsp. hydrophila (strain ATCC 7966 / DSM 30187 / BCRC 13018 / CCUG 14551 / JCM 1027 / KCTC 2358 / NCIMB 9240 / NCTC 8049).